The chain runs to 134 residues: Small ribosomal subunit protein uS11 (134 aa).

Positions 114-134 (TPVPHNGTRPPRKWFKRQEKR) are disordered. Positions 123–134 (PPRKWFKRQEKR) are enriched in basic residues.

It belongs to the universal ribosomal protein uS11 family. As to quaternary structure, part of the 30S ribosomal subunit. Interacts with proteins S7 and S18. Binds to IF-3.

In terms of biological role, located on the platform of the 30S subunit, it bridges several disparate RNA helices of the 16S rRNA. Forms part of the Shine-Dalgarno cleft in the 70S ribosome. The polypeptide is Small ribosomal subunit protein uS11 (Mesomycoplasma hyopneumoniae (strain J / ATCC 25934 / NCTC 10110) (Mycoplasma hyopneumoniae)).